The primary structure comprises 95 residues: UPF0358 protein BCG9842_B1188 (95 aa).

The protein belongs to the UPF0358 family.

The polypeptide is UPF0358 protein BCG9842_B1188 (Bacillus cereus (strain G9842)).